A 115-amino-acid polypeptide reads, in one-letter code: Phosphoribosyl-AMP cyclohydrolase (115 aa).

Aspartate 80 serves as a coordination point for Mg(2+). Cysteine 81 contacts Zn(2+). Mg(2+) is bound by residues aspartate 82 and aspartate 84. Positions 97 and 104 each coordinate Zn(2+).

This sequence belongs to the PRA-CH family. In terms of assembly, homodimer. Mg(2+) serves as cofactor. It depends on Zn(2+) as a cofactor.

It is found in the cytoplasm. It carries out the reaction 1-(5-phospho-beta-D-ribosyl)-5'-AMP + H2O = 1-(5-phospho-beta-D-ribosyl)-5-[(5-phospho-beta-D-ribosylamino)methylideneamino]imidazole-4-carboxamide. The protein operates within amino-acid biosynthesis; L-histidine biosynthesis; L-histidine from 5-phospho-alpha-D-ribose 1-diphosphate: step 3/9. In terms of biological role, catalyzes the hydrolysis of the adenine ring of phosphoribosyl-AMP. The protein is Phosphoribosyl-AMP cyclohydrolase of Mycobacterium sp. (strain MCS).